A 127-amino-acid polypeptide reads, in one-letter code: Arginine decarboxylase proenzyme (127 aa).

Ser72 serves as the catalytic Schiff-base intermediate with substrate; via pyruvic acid. Residue Ser72 is modified to Pyruvic acid (Ser); by autocatalysis. His77 functions as the Proton acceptor; for processing activity in the catalytic mechanism. The active-site Proton donor; for catalytic activity is the Cys92.

The protein belongs to the prokaryotic AdoMetDC family. Type 1 subfamily. In terms of assembly, heterooctamer of four alpha and four beta chains arranged as a tetramer of alpha/beta heterodimers. Pyruvate is required as a cofactor. In terms of processing, is synthesized initially as an inactive proenzyme. Formation of the active enzyme involves a self-maturation process in which the active site pyruvoyl group is generated from an internal serine residue via an autocatalytic post-translational modification. Two non-identical subunits are generated from the proenzyme in this reaction, and the pyruvate is formed at the N-terminus of the alpha chain, which is derived from the carboxyl end of the proenzyme. The post-translation cleavage follows an unusual pathway, termed non-hydrolytic serinolysis, in which the side chain hydroxyl group of the serine supplies its oxygen atom to form the C-terminus of the beta chain, while the remainder of the serine residue undergoes an oxidative deamination to produce ammonia and the pyruvoyl group blocking the N-terminus of the alpha chain.

It carries out the reaction L-arginine + H(+) = agmatine + CO2. It participates in amine and polyamine biosynthesis; agmatine biosynthesis; agmatine from L-arginine: step 1/1. Specifically catalyzes the decarboxylation of L-arginine to agmatine. Has no S-adenosylmethionine decarboxylase (AdoMetDC) activity. The chain is Arginine decarboxylase proenzyme from Staphylothermus marinus (strain ATCC 43588 / DSM 3639 / JCM 9404 / F1).